Reading from the N-terminus, the 1124-residue chain is MSSYFWAQNESNRPDLLCGQPADYLVEEKHFTTLVCFIVVLGGLLKMCLKNCEVIVLTILSLSGFVIGHMAYNSVEVHQIVYPLLRTSSFSLYSYFSPLIIFMVALDVEFYTLKKMFWQVLLTGLISFSTASIIIGYVVIKFNKDSWDLQSCLLFSITLGIIDPLRSVNSLKTIGISKIYIDLIRGESLIICSIASIFFGNFRGNRIHFSIFRDLHVGIELSYDILGSIIFGYWCAKIIQCILADVFSNMLTNIILCFSMVYMTFYIVEFLGMSGTLALAAVGLNLDSLTFKPKIELVITKFLRIFSSVYEHLIYAFFGIVIGCGELSHYEFHTIPFIFILFTTVNLVRLLTILLVSPILMHSNYEYNWRWGVVITWSGIKGVFNLLWAPDVYNLAERKVEVPQMFILYVQVISLLTMGINSYVMTQSARKLDLCVLSLPRQMILQNATQHIQEIVQNTITLFKTEKILTNVNWTLVEDKTRIEYIPFSHVSHNDMKTESTTDEALMEEARLHVAAIQMSSFEKQRNNGILEIEAARILIGAAKCYYSIQGKFMSIYDVSTYMRTRSWLIKFKNVLTFLEYCIEKIHFIPPESNTFLTFIFHIVFSEEFEYTGQIINLIYIYPMIIHLWPMARGLNVSALISINYYFMFLYVLESTLKIIILKRKYFQQCWNTLEFFILVIGIIDIFCVYFVKLRPDNLALIQLTVIMGYLRIIRFLPLFKIIVPILIRIADVQIKKRLSLMYSITKGYIKSQEDAKLLIKQIAVCESIYQKLCEILETNKQDAVKELVLMEHEGRDVVIALKTKQAIRNVIAKALKNLTFLCSRGIIDKHEVIEINKVLLKKLKALNNFPKAIPPPTPDIYLHNIIWLEGKDVLIDFFKERAKLACFDSGDTICKGGEMPQGIYLIISGMAILHSLSPTFGIESNQRCDRGSRDMFTEFCTTGDIIGELSCLLKREIEYTVICETSLQACFISLEDLYEGFDAFWPSLEYKIWLKLALSTAYQYFESSLIDEDLRFQNCVMFNQAYVETLSSYSDMIIDNMTMKFVIIVYGSVIDTKTEEPYFAPCIIPTTCEQVQGTSDLSKLLIIQASELTQRNSNTNVMASVNTVFEQPGKNINGRQKMS.

11 consecutive transmembrane segments (helical) span residues 25–45, 52–72, 90–110, 120–140, 179–199, 224–244, 254–274, 305–325, 335–355, 372–392, and 405–425; these read LVEEKHFTTLVCFIVVLGGLL, CEVIVLTILSLSGFVIGHMAY, FSLYSYFSPLIIFMVALDVEF, VLLTGLISFSTASIIIGYVVI, IYIDLIRGESLIICSIASIFF, DILGSIIFGYWCAKIIQCILA, IILCFSMVYMTFYIVEFLGMS, IFSSVYEHLIYAFFGIVIGCG, IPFIFILFTTVNLVRLLTILL, GVVITWSGIKGVFNLLWAPDV, and MFILYVQVISLLTMGINSYVM. Residues N447 and N473 are each glycosylated (N-linked (GlcNAc...) asparagine). Transmembrane regions (helical) follow at residues 612–632, 641–661, 674–694, and 706–726; these read TGQIINLIYIYPMIIHLWPMA, ISINYYFMFLYVLESTLKIII, LEFFILVIGIIDIFCVYFVKL, and VIMGYLRIIRFLPLFKIIVPI. The ion transport-like stretch occupies residues 642–723; it reads SINYYFMFLY…IRFLPLFKII (82 aa). A nucleoside 3',5'-cyclic phosphate is bound at residue 867–999; the sequence is IWLEGKDVLI…EYKIWLKLAL (133 aa).

This sequence belongs to the monovalent cation:proton antiporter 1 (CPA1) transporter (TC 2.A.36) family.

Its subcellular location is the membrane. In terms of biological role, involved in pH regulation. In Homo sapiens (Human), this protein is Sodium/hydrogen exchanger 11 (SLC9C2).